Here is a 168-residue protein sequence, read N- to C-terminus: Protein yop-1 (168 aa).

The Cytoplasmic segment spans residues 1-35 (MSSPQDRAQQYIGQLDKELSKYPTLNNLEKTTGVP). The helical transmembrane segment at 36–55 (KAYAVIGLVALYFFLIIFNL) threads the bilayer. Glycine 56 is a topological domain (lumenal). The chain crosses the membrane as a helical span at residues 57 to 76 (GQLLTNLAGFVLPGYYSLNA). The Cytoplasmic portion of the chain corresponds to 77 to 86 (LFTASKQDDT). Residues 87–103 (QWLTYWVVFSLFTVIES) traverse the membrane as a helical segment. Residues 104–105 (LI) lie on the Lumenal side of the membrane. Residues 106-124 (SVVYWFPFYFTFKFVFLLW) form a helical membrane-spanning segment. The Cytoplasmic segment spans residues 125–168 (LSLPTFKGAETIFRSFLAPTLGRYFQNGSTASGLRAKADAVHTD).

Belongs to the DP1 family. Oligomer.

It is found in the endoplasmic reticulum membrane. The protein localises to the golgi apparatus membrane. Its function is as follows. Required to generate and maintain the structure of the tubular endoplasmic reticulum network and the vacuole. Induces high curvature in membranes and causes membrane tubule formation. Involved in membrane/vesicle trafficking. In Neurospora crassa (strain ATCC 24698 / 74-OR23-1A / CBS 708.71 / DSM 1257 / FGSC 987), this protein is Protein yop-1 (yop-1).